A 776-amino-acid polypeptide reads, in one-letter code: Ent-8-alpha-hydroxylabd-13-en-15-yl diphosphate synthase CPS4, chloroplastic (776 aa).

The transit peptide at 1–60 directs the protein to the chloroplast; it reads MSFASNATGFRIPLTTCVYPSPILRFNAKVGSGSSYGTTEAQRNMKCVDGIGRSRVVAVA. K226 contributes to the substrate binding site. Mg(2+) contacts are provided by D357 and D359. The short motif at 357–360 is the DXDD motif element; it reads DSDD. K443 serves as a coordination point for substrate.

It belongs to the terpene synthase family. Mg(2+) is required as a cofactor.

It is found in the plastid. The protein resides in the chloroplast. It catalyses the reaction ent-8alpha-hydroxylabd-13-en-15-yl diphosphate = (2E,6E,10E)-geranylgeranyl diphosphate + H2O. It participates in secondary metabolite biosynthesis; terpenoid biosynthesis. Its function is as follows. Involved in diterpenoid biosynthesis. Catalyzes the conversion of all-trans-geranylgeranyl diphosphate to ent-8alpha-hydroxylabd-13-en-15-yl diphosphate. The polypeptide is Ent-8-alpha-hydroxylabd-13-en-15-yl diphosphate synthase CPS4, chloroplastic (Salvia miltiorrhiza (Chinese sage)).